We begin with the raw amino-acid sequence, 149 residues long: YbbR-like domain-containing protein in def 5'region (149 aa).

A YbbR-like domain is found at 1 to 68 (IPVEVLAQGA…LRPNRVRVVE (68 aa)).

This is YbbR-like domain-containing protein in def 5'region from Thermus thermophilus.